Consider the following 391-residue polypeptide: tRNA-specific 2-thiouridylase MnmA (391 aa).

Residues 9 to 16 (GMSGGVDS) and Met35 each bind ATP. The tract at residues 95–97 (NPD) is interaction with target base in tRNA. Catalysis depends on Cys100, which acts as the Nucleophile. An intrachain disulfide couples Cys100 to Cys196. Gly124 is a binding site for ATP. The interaction with tRNA stretch occupies residues 146 to 148 (KDQ). Cys196 acts as the Cysteine persulfide intermediate in catalysis. The tract at residues 308–309 (RY) is interaction with tRNA. The span at 372–382 (TGQPGQATSTG) shows a compositional bias: polar residues. The segment at 372-391 (TGQPGQATSTGHAPALAEAR) is disordered.

The protein belongs to the MnmA/TRMU family.

It is found in the cytoplasm. The enzyme catalyses S-sulfanyl-L-cysteinyl-[protein] + uridine(34) in tRNA + AH2 + ATP = 2-thiouridine(34) in tRNA + L-cysteinyl-[protein] + A + AMP + diphosphate + H(+). Its function is as follows. Catalyzes the 2-thiolation of uridine at the wobble position (U34) of tRNA, leading to the formation of s(2)U34. The sequence is that of tRNA-specific 2-thiouridylase MnmA from Burkholderia cenocepacia (strain ATCC BAA-245 / DSM 16553 / LMG 16656 / NCTC 13227 / J2315 / CF5610) (Burkholderia cepacia (strain J2315)).